We begin with the raw amino-acid sequence, 257 residues long: BTB/POZ domain-containing protein kctd15-like (257 aa).

Ser-9 and Ser-12 each carry phosphoserine. The 71-residue stretch at 30-100 (APVHIDVGGH…LRTSKLLLPE (71 aa)) folds into the BTB domain.

The sequence is that of BTB/POZ domain-containing protein kctd15-like (kctd15l) from Danio rerio (Zebrafish).